A 365-amino-acid chain; its full sequence is Large ribosomal subunit protein uL3 (365 aa).

Residues 343–365 are disordered; sequence RPPKKKPPVQRPQITYVSVESKQ. The span at 354–365 shows a compositional bias: polar residues; it reads PQITYVSVESKQ.

Belongs to the universal ribosomal protein uL3 family. As to quaternary structure, part of the 50S ribosomal subunit. Forms a cluster with proteins L14 and L24e.

Its function is as follows. One of the primary rRNA binding proteins, it binds directly near the 3'-end of the 23S rRNA, where it nucleates assembly of the 50S subunit. The polypeptide is Large ribosomal subunit protein uL3 (Pyrococcus furiosus (strain ATCC 43587 / DSM 3638 / JCM 8422 / Vc1)).